A 247-amino-acid chain; its full sequence is Cyclin-Q (247 aa).

Belongs to the cyclin family. Cyclin-like FAM58 subfamily.

May be an activating cyclin for the cyclin-associated kinase CDK10. In Danio rerio (Zebrafish), this protein is Cyclin-Q (ccnq).